A 121-amino-acid chain; its full sequence is Large ribosomal subunit protein bL12 (121 aa).

Belongs to the bacterial ribosomal protein bL12 family. Homodimer. Part of the ribosomal stalk of the 50S ribosomal subunit. Forms a multimeric L10(L12)X complex, where L10 forms an elongated spine to which 2 to 4 L12 dimers bind in a sequential fashion. Binds GTP-bound translation factors.

Functionally, forms part of the ribosomal stalk which helps the ribosome interact with GTP-bound translation factors. Is thus essential for accurate translation. This chain is Large ribosomal subunit protein bL12, found in Limosilactobacillus reuteri (strain DSM 20016) (Lactobacillus reuteri).